A 542-amino-acid chain; its full sequence is MYKNSIRTRPLKRFISNHAKGKFALDPAYKLKCGLEIHTQLNTRYKLFSYTSNEAENLTISPNTSTSHYDISLPGTQPRLNYEAVLYATKLALSLDSDINLISQFDRKHYFYGDQPQGYQVTQHYKPFAKNGKLTLYGAYEDINENEKTIRIEQLQIEQDTGKSLYASGADMTTMIDLNRSNVPLIELVTKPDFEDLKQVRAFIKKYQDLVRRLNICTGNLETGSMRIDVNLSVNDFARVELKNLPNTSSIMNAIKFEYERQLHIIKNGEGERLLRDTETRGWTGSETVKLRSKETSIDYRYMPDPEIPFITIADDVVHKVKSTLPVSADALLREFMNKPYNLPIKHAKILCISGNQNEMYDHEQLRKYYKDVCVHYQKEYPDDNLKIPSNWILNEFIGNLNKLETKLNEIYEILTPSTFFELIRLMKQGVITGNSSKLLLFHIVNNVKTGVFTKSSQINLKQLINEYELQAADQINEHELEEICRSIIDDIKDEKLLQNLISGKKKTSLKFLVGQGMRLSQGRLNPNELEKMFRQVLDIKW.

This sequence belongs to the GatB/GatE family. GatB subfamily. Subunit of the heterotrimeric GatFAB amidotransferase (AdT) complex, composed of A, B and F subunits.

Its subcellular location is the mitochondrion. The catalysed reaction is L-glutamyl-tRNA(Gln) + L-glutamine + ATP + H2O = L-glutaminyl-tRNA(Gln) + L-glutamate + ADP + phosphate + H(+). Its function is as follows. Allows the formation of correctly charged Gln-tRNA(Gln) through the transamidation of misacylated Glu-tRNA(Gln) in the mitochondria. The reaction takes place in the presence of glutamine and ATP through an activated gamma-phospho-Glu-tRNA(Gln). This is Glutamyl-tRNA(Gln) amidotransferase subunit B, mitochondrial from Candida glabrata (strain ATCC 2001 / BCRC 20586 / JCM 3761 / NBRC 0622 / NRRL Y-65 / CBS 138) (Yeast).